Here is a 227-residue protein sequence, read N- to C-terminus: Cytochrome c oxidase subunit 2 (227 aa).

Residues Met-1–Ser-14 lie on the Mitochondrial intermembrane side of the membrane. A helical transmembrane segment spans residues Pro-15–Met-45. The Mitochondrial matrix segment spans residues Leu-46–Gln-59. Residues Glu-60 to Met-87 traverse the membrane as a helical segment. Over Asp-88–Leu-227 the chain is Mitochondrial intermembrane. Cu cation is bound by residues His-161, Cys-196, Glu-198, Cys-200, His-204, and Met-207. Residue Glu-198 participates in Mg(2+) binding.

The protein belongs to the cytochrome c oxidase subunit 2 family. As to quaternary structure, component of the cytochrome c oxidase (complex IV, CIV), a multisubunit enzyme composed of 14 subunits. The complex is composed of a catalytic core of 3 subunits MT-CO1, MT-CO2 and MT-CO3, encoded in the mitochondrial DNA, and 11 supernumerary subunits COX4I, COX5A, COX5B, COX6A, COX6B, COX6C, COX7A, COX7B, COX7C, COX8 and NDUFA4, which are encoded in the nuclear genome. The complex exists as a monomer or a dimer and forms supercomplexes (SCs) in the inner mitochondrial membrane with NADH-ubiquinone oxidoreductase (complex I, CI) and ubiquinol-cytochrome c oxidoreductase (cytochrome b-c1 complex, complex III, CIII), resulting in different assemblies (supercomplex SCI(1)III(2)IV(1) and megacomplex MCI(2)III(2)IV(2)). Found in a complex with TMEM177, COA6, COX18, COX20, SCO1 and SCO2. Interacts with TMEM177 in a COX20-dependent manner. Interacts with COX20. Interacts with COX16. It depends on Cu cation as a cofactor.

The protein localises to the mitochondrion inner membrane. It catalyses the reaction 4 Fe(II)-[cytochrome c] + O2 + 8 H(+)(in) = 4 Fe(III)-[cytochrome c] + 2 H2O + 4 H(+)(out). Component of the cytochrome c oxidase, the last enzyme in the mitochondrial electron transport chain which drives oxidative phosphorylation. The respiratory chain contains 3 multisubunit complexes succinate dehydrogenase (complex II, CII), ubiquinol-cytochrome c oxidoreductase (cytochrome b-c1 complex, complex III, CIII) and cytochrome c oxidase (complex IV, CIV), that cooperate to transfer electrons derived from NADH and succinate to molecular oxygen, creating an electrochemical gradient over the inner membrane that drives transmembrane transport and the ATP synthase. Cytochrome c oxidase is the component of the respiratory chain that catalyzes the reduction of oxygen to water. Electrons originating from reduced cytochrome c in the intermembrane space (IMS) are transferred via the dinuclear copper A center (CU(A)) of subunit 2 and heme A of subunit 1 to the active site in subunit 1, a binuclear center (BNC) formed by heme A3 and copper B (CU(B)). The BNC reduces molecular oxygen to 2 water molecules using 4 electrons from cytochrome c in the IMS and 4 protons from the mitochondrial matrix. This chain is Cytochrome c oxidase subunit 2 (MT-CO2), found in Damaliscus pygargus phillipsi (Blesbok).